The primary structure comprises 308 residues: Elongation factor Ts (308 aa).

Residues 80–83 (TDFV) are involved in Mg(2+) ion dislocation from EF-Tu.

It belongs to the EF-Ts family.

It is found in the cytoplasm. Associates with the EF-Tu.GDP complex and induces the exchange of GDP to GTP. It remains bound to the aminoacyl-tRNA.EF-Tu.GTP complex up to the GTP hydrolysis stage on the ribosome. This Methylobacterium radiotolerans (strain ATCC 27329 / DSM 1819 / JCM 2831 / NBRC 15690 / NCIMB 10815 / 0-1) protein is Elongation factor Ts.